The primary structure comprises 377 residues: Presenilin-associated rhomboid-like protein, mitochondrial (377 aa).

The N-terminal 52 residues, 1–52, are a transit peptide targeting the mitochondrion; the sequence is MAWRGWAQRGWGCGQAWTLPVCGGSYEELTAALAPSRLLRRRFNFFIQQKCG. The Mitochondrial matrix segment spans residues 53-99; it reads FRKAPRKVEPRRSDTSSEAYKRSALIPPVEETAFYPSPYPIRTLVKP. Residues Ser-65 and Ser-68 each carry the phosphoserine modification. Residues 100–119 form a helical membrane-spanning segment; the sequence is LFFTVGFTGCAFGSAAIWQY. Residues 120-165 are Mitochondrial intermembrane-facing; the sequence is ESLKSKVQSYFDGIKADWLDSIRPQKEGDFRKEINKWWNNLSDGQR. A helical transmembrane segment spans residues 166 to 185; the sequence is TVTGIIAANVFVFCLWRVPS. Topologically, residues 186-205 are mitochondrial matrix; that stretch reads LQRTMIRYFTSNPASKVLCS. A helical membrane pass occupies residues 206–228; sequence PMLLSTFSHFSLFHMAANMYVLW. The Mitochondrial intermembrane segment spans residues 229–242; that stretch reads SFSSSIVNILGQEQ. Residues 243–260 traverse the membrane as a helical segment; the sequence is FMAVYLSAGVISTFVSYV. Residues 261–270 lie on the Mitochondrial matrix side of the membrane; that stretch reads CKVATGRYGP. The helical transmembrane segment at 271-287 threads the bilayer; the sequence is SLGASGAIMTVLAAVCT. Ser-275 acts as the Nucleophile in catalysis. Topologically, residues 288–293 are mitochondrial intermembrane; that stretch reads KIPEGR. Residues 294–316 form a helical membrane-spanning segment; sequence LAIIFLPMFTFTAGNALKAIIAM. Residues 317–330 lie on the Mitochondrial matrix side of the membrane; that stretch reads DTAGMILGWKFFDH. The chain crosses the membrane as a helical span at residues 331–352; sequence AAHLGGALFGIWYITYGHELIW. Residue His-333 is part of the active site. Topologically, residues 353–377 are mitochondrial intermembrane; sequence KNREPLVKIWHEMRTNSPKKGGGSK.

The protein belongs to the peptidase S54 family. Interacts with PSEN1 and PSEN2. Binds OPA1. In terms of processing, P-beta is proteolytically processed (beta-cleavage) in a PARL-dependent manner.

It is found in the mitochondrion inner membrane. The protein localises to the nucleus. The catalysed reaction is Cleaves type-1 transmembrane domains using a catalytic dyad composed of serine and histidine that are contributed by different transmembrane domains.. In terms of biological role, required for the control of apoptosis during postnatal growth. Essential for proteolytic processing of an antiapoptotic form of OPA1 which prevents the release of mitochondrial cytochrome c in response to intrinsic apoptotic signals. Required for the maturation of PINK1 into its 52kDa mature form after its cleavage by mitochondrial-processing peptidase (MPP). Promotes cleavage of serine/threonine-protein phosphatase PGAM5 in damaged mitochondria in response to loss of mitochondrial membrane potential. Mediates differential cleavage of PINK1 and PGAM5 depending on the health status of mitochondria, disassociating from PINK1 and associating with PGAM5 in response to mitochondrial membrane potential loss. Required for processing of CLPB into a form with higher protein disaggregase activity by removing an autoinhibitory N-terminal peptide. Promotes processing of DIABLO/SMAC in the mitochondrion which is required for DIABLO apoptotic activity. Also required for cleavage of STARD7 and TTC19. Promotes changes in mitochondria morphology regulated by phosphorylation of P-beta domain. The sequence is that of Presenilin-associated rhomboid-like protein, mitochondrial (PARL) from Bos taurus (Bovine).